A 261-amino-acid polypeptide reads, in one-letter code: Uridylate kinase (261 aa).

The interval 1–23 (MTEPDVAGAPASKPEPASTGAAS) is disordered. 36–39 (KLGG) contributes to the ATP binding site. Glycine 77 is a binding site for UMP. ATP-binding residues include glycine 78 and arginine 82. UMP contacts are provided by residues aspartate 97 and 158-165 (MGLPYFST). Residues phenylalanine 191 and aspartate 194 each contribute to the ATP site.

Belongs to the UMP kinase family. Homohexamer.

It localises to the cytoplasm. The catalysed reaction is UMP + ATP = UDP + ADP. It functions in the pathway pyrimidine metabolism; CTP biosynthesis via de novo pathway; UDP from UMP (UMPK route): step 1/1. Its activity is regulated as follows. Inhibited by UTP. Catalyzes the reversible phosphorylation of UMP to UDP. The sequence is that of Uridylate kinase from Mycobacterium tuberculosis (strain ATCC 25177 / H37Ra).